Reading from the N-terminus, the 111-residue chain is Prothymosin alpha-A (111 aa).

Residues 1 to 111 (MSDTAVDASV…IKKQKTDEDD (111 aa)) form a disordered region. The span at 9–42 (SVEKTTKDLKAKEKEVVEEAENGKDKPTNGKAEN) shows a compositional bias: basic and acidic residues. 2 stretches are compositionally biased toward acidic residues: residues 43–81 (EENG…DEVE) and 90–100 (EDDEDDDDDDV). Residues 101 to 111 (EIKKQKTDEDD) show a composition bias toward basic and acidic residues.

It belongs to the pro/parathymosin family.

It is found in the nucleus. The sequence is that of Prothymosin alpha-A (ptma-a) from Xenopus laevis (African clawed frog).